A 204-amino-acid chain; its full sequence is Large ribosomal subunit protein eL15 (204 aa).

Belongs to the eukaryotic ribosomal protein eL15 family. As to quaternary structure, component of the large ribosomal subunit.

The protein localises to the cytoplasm. Component of the large ribosomal subunit. The ribosome is a large ribonucleoprotein complex responsible for the synthesis of proteins in the cell. This chain is Large ribosomal subunit protein eL15 (rpl15), found in Hypophthalmichthys nobilis (Bighead carp).